A 541-amino-acid polypeptide reads, in one-letter code: Phosphatidylethanolamine transferase Mcr-1 (541 aa).

At 1-14 (MMQHTSVWYRRSVS) the chain is on the cytoplasmic side. A helical transmembrane segment spans residues 15 to 35 (PFVLVASVAVFLTATANLTFF). Residues 36–47 (DKISQTYPIADN) lie on the Periplasmic side of the membrane. The helical transmembrane segment at 48-68 (LGFVLTIAVVLFGAMLLITTL) threads the bilayer. Topologically, residues 69-73 (LSSYR) are cytoplasmic. A helical membrane pass occupies residues 74–94 (YVLKPVLILLLIMGAVTSYFT). At 95 to 122 (DTYGTVYDTTMLQNALQTDQAETKDLLN) the chain is on the periplasmic side. The helical transmembrane segment at 123 to 143 (AAFIMRIIGLGVLPSLLVAFV) threads the bilayer. The Cytoplasmic segment spans residues 144–157 (KVDYPTWGKGLMRR). The chain crosses the membrane as a helical span at residues 158–178 (LGLIVASLALILLPVVAFSSH). Residues 179–541 (YASFFRVHKP…KVKDRTAFIR (363 aa)) lie on the Periplasmic side of the membrane. Residues E246 and T285 each coordinate Zn(2+). 3 disulfides stabilise this stretch: C281–C291, C356–C364, and C414–C422. Position 285 is a phosphothreonine (T285). Positions 465 and 466 each coordinate Zn(2+).

It belongs to the phosphoethanolamine transferase family. In terms of assembly, monomer. Post-translationally, phosphorylated at Thr-285; may represent an intermediate in the catalytic mechanism.

Its subcellular location is the cell inner membrane. The enzyme catalyses lipid A (E. coli) + a 1,2-diacyl-sn-glycero-3-phosphoethanolamine + H(+) = lipid A 4'-(2-aminoethyl diphosphate) (E. coli) + a 1,2-diacyl-sn-glycerol. With respect to regulation, EDTA may inhibit activity. May be inhibited by ethanolamine. Its function is as follows. Probably catalyzes the addition of a phosphoethanolamine moiety to lipid A. Phosphoethanolamine modification of lipid A confers polymyxin resistance. Confers resistance to polymyxin-type antibiotics such as colistin; in the E.coli strain W3110. The chain is Phosphatidylethanolamine transferase Mcr-1 (mcr1) from Escherichia coli.